The chain runs to 482 residues: 7-deoxyloganetic acid glucosyltransferase (482 aa).

His-22 acts as the Proton acceptor in catalysis. Residue His-22 coordinates an anthocyanidin. Catalysis depends on Asp-127, which acts as the Charge relay. Residues Thr-149, Ala-362, Gln-364, His-379, Trp-382, Asn-383, Ser-384, and Glu-387 each contribute to the UDP-alpha-D-glucose site. An anthocyanidin is bound at residue Ala-402. Asp-403 and Gln-404 together coordinate UDP-alpha-D-glucose.

This sequence belongs to the UDP-glycosyltransferase family. In terms of tissue distribution, expressed in leaves, roots and stems. Lower levels of expression in flowers. Preferentially expressed in internal phloem parenchyma cells.

It carries out the reaction 7-deoxyloganetate + UDP-alpha-D-glucose = 7-deoxyloganate + UDP + H(+). Its function is as follows. Iridoid glucosyltransferase acting exclusively on 7-deoxyloganetic acid. No activity with 7-deoxyloganetin. Catalyzes the fourth to last step in secologanin biosynthesis. This Catharanthus roseus (Madagascar periwinkle) protein is 7-deoxyloganetic acid glucosyltransferase (UGT709C2).